The primary structure comprises 361 residues: Cysteine-rich with EGF-like domain protein 2-A (361 aa).

Residues 1–24 (MNGSRALHLSAWLLLCLLCSAAVA) form the signal peptide. The EGF-like 1 domain occupies 134–176 (DCLACLGGSERPCHGNGFCNGDGTRSGDGLCRCEAEYTGPFCL). Intrachain disulfides connect cysteine 138–cysteine 152, cysteine 146–cysteine 164, and cysteine 166–cysteine 175. An N-linked (GlcNAc...) asparagine glycan is attached at asparagine 188. 2 FU repeats span residues 191–238 (YSLC…EESP) and 251–298 (SFLC…SEQV). One can recognise an EGF-like 2; calcium-binding domain in the interval 288–329 (DVDECDASEQVCSRENETCLNTAGSYKCTCSEGFEDKEGNCV). 3 cysteine pairs are disulfide-bonded: cysteine 292-cysteine 306, cysteine 299-cysteine 315, and cysteine 317-cysteine 328. N-linked (GlcNAc...) asparagine glycosylation occurs at asparagine 303. Residues 341-361 (DGEMGTSASDINISNTAHEDL) form a disordered region. Residues 346–361 (TSASDINISNTAHEDL) are compositionally biased toward polar residues. An N-linked (GlcNAc...) asparagine glycan is attached at asparagine 352.

This sequence belongs to the CRELD family.

The protein localises to the secreted. It localises to the endoplasmic reticulum. In terms of biological role, possible role in neuronal acetylcholine receptor transport. The protein is Cysteine-rich with EGF-like domain protein 2-A (creld2-a) of Xenopus laevis (African clawed frog).